Here is a 453-residue protein sequence, read N- to C-terminus: ACT domain-containing protein ACR3 (453 aa).

4 consecutive ACT domains span residues 37 to 112 (LVKV…SASQ), 130 to 212 (SIEI…KFAR), 266 to 341 (VINV…RVSE), and 344 to 423 (SLEL…VPSR).

As to expression, expressed in roots, cotyledons, rosette and cauline leaves, sepals, style, and pedicels and tips of young developing siliques.

In terms of biological role, may bind amino acids. The sequence is that of ACT domain-containing protein ACR3 from Arabidopsis thaliana (Mouse-ear cress).